The sequence spans 113 residues: Large ribosomal subunit protein uL22 (113 aa).

The protein belongs to the universal ribosomal protein uL22 family. As to quaternary structure, part of the 50S ribosomal subunit.

This protein binds specifically to 23S rRNA; its binding is stimulated by other ribosomal proteins, e.g. L4, L17, and L20. It is important during the early stages of 50S assembly. It makes multiple contacts with different domains of the 23S rRNA in the assembled 50S subunit and ribosome. In terms of biological role, the globular domain of the protein is located near the polypeptide exit tunnel on the outside of the subunit, while an extended beta-hairpin is found that lines the wall of the exit tunnel in the center of the 70S ribosome. In Geobacillus stearothermophilus (Bacillus stearothermophilus), this protein is Large ribosomal subunit protein uL22.